A 532-amino-acid polypeptide reads, in one-letter code: Bifunctional purine biosynthesis protein PurH (532 aa).

Positions M1–T149 constitute an MGS-like domain.

Belongs to the PurH family.

It catalyses the reaction (6R)-10-formyltetrahydrofolate + 5-amino-1-(5-phospho-beta-D-ribosyl)imidazole-4-carboxamide = 5-formamido-1-(5-phospho-D-ribosyl)imidazole-4-carboxamide + (6S)-5,6,7,8-tetrahydrofolate. It carries out the reaction IMP + H2O = 5-formamido-1-(5-phospho-D-ribosyl)imidazole-4-carboxamide. The protein operates within purine metabolism; IMP biosynthesis via de novo pathway; 5-formamido-1-(5-phospho-D-ribosyl)imidazole-4-carboxamide from 5-amino-1-(5-phospho-D-ribosyl)imidazole-4-carboxamide (10-formyl THF route): step 1/1. It functions in the pathway purine metabolism; IMP biosynthesis via de novo pathway; IMP from 5-formamido-1-(5-phospho-D-ribosyl)imidazole-4-carboxamide: step 1/1. This chain is Bifunctional purine biosynthesis protein PurH, found in Jannaschia sp. (strain CCS1).